A 335-amino-acid polypeptide reads, in one-letter code: Spike protein P1 (335 aa).

In terms of assembly, monomer.

The protein resides in the virion. In terms of biological role, receptor binding protein located at the fivefold vertices. The protein is Spike protein P1 (I) of Pseudoalteromonas espejiana (Bacteriophage PM2).